Reading from the N-terminus, the 92-residue chain is Large ribosomal subunit protein bL36m (92 aa).

Residues 1 to 54 constitute a mitochondrion transit peptide; the sequence is MASLGRKFFAVGVLSRVFPSAFNAQKGLLKNASMFLTPAFRLSPSLLPWNFSRG.

The protein belongs to the bacterial ribosomal protein bL36 family. As to quaternary structure, component of the mitochondrial large ribosomal subunit (mt-LSU). Mature yeast 74S mitochondrial ribosomes consist of a small (37S) and a large (54S) subunit. The 37S small subunit contains a 15S ribosomal RNA (15S mt-rRNA) and at least 32 different proteins. The 54S large subunit contains a 21S rRNA (21S mt-rRNA) and at least 45 different proteins. bL36m has a zinc binding site.

It localises to the mitochondrion. Its function is as follows. Component of the mitochondrial ribosome (mitoribosome), a dedicated translation machinery responsible for the synthesis of mitochondrial genome-encoded proteins, including at least some of the essential transmembrane subunits of the mitochondrial respiratory chain. The mitoribosomes are attached to the mitochondrial inner membrane and translation products are cotranslationally integrated into the membrane. bL36m may be involved in a process influencing telomere capping. This chain is Large ribosomal subunit protein bL36m (rtc6), found in Schizosaccharomyces pombe (strain 972 / ATCC 24843) (Fission yeast).